Consider the following 164-residue polypeptide: 2-keto-3-deoxy-D-glycero-D-galacto-9-phosphonononic acid phosphatase (164 aa).

D10 and D12 together coordinate Mg(2+). Substrate is bound by residues T34, 54–56, 64–67, and K80; these read TGE and RAEK. D103 contacts Mg(2+). N106 lines the substrate pocket.

Belongs to the KdsC family. Homotetramer. The cofactor is Mg(2+).

The catalysed reaction is 3-deoxy-D-glycero-beta-D-galacto-non-2-ulopyranosonate 9-phosphate + H2O = 3-deoxy-D-glycero-beta-D-galacto-non-2-ulopyranosonate + phosphate. In terms of biological role, involved in the biosynthesis of 2-keto-3-deoxy-D-glycero-D-galacto-nononic acid used in cell-wall polysaccharides. Catalyzes the hydrolysis of 2-keto-3-deoxy-D-glycero-D-galacto-9-phosphonononic acid (KDN-9-P) to yield 2-keto-3-deoxy-D-glycero-D-galacto-nononic acid (KDN). Also able to hydrolyze N-acetylneuraminate-9-phosphate (Neu5NAc-9-P), 2-keto-3-deoxy-D-manno-octulosonate-8-phosphate (KDO-8-P), phosphoenolpyruvate (PEP), gluconate 6-phosphate, tyrosine phosphate ester and glucose-6-P as substrate. The sequence is that of 2-keto-3-deoxy-D-glycero-D-galacto-9-phosphonononic acid phosphatase from Bacteroides thetaiotaomicron (strain ATCC 29148 / DSM 2079 / JCM 5827 / CCUG 10774 / NCTC 10582 / VPI-5482 / E50).